A 366-amino-acid chain; its full sequence is Flagellar P-ring protein (366 aa).

A signal peptide spans 1–20 (MVIKFLSALILLLVTTAAQA).

Belongs to the FlgI family. In terms of assembly, the basal body constitutes a major portion of the flagellar organelle and consists of four rings (L,P,S, and M) mounted on a central rod.

The protein localises to the periplasm. Its subcellular location is the bacterial flagellum basal body. Functionally, assembles around the rod to form the L-ring and probably protects the motor/basal body from shearing forces during rotation. This chain is Flagellar P-ring protein, found in Escherichia coli (strain SE11).